The sequence spans 199 residues: Small ribosomal subunit protein mS38 (199 aa).

The protein belongs to the mitochondrion-specific ribosomal protein mS38 family. In terms of assembly, component of the mitochondrial small ribosomal subunit (mt-SSU). Mature mammalian 55S mitochondrial ribosomes consist of a small (28S) and a large (39S) subunit. The 28S small subunit contains a 12S ribosomal RNA (12S mt-rRNA) and 30 different proteins. The 39S large subunit contains a 16S rRNA (16S mt-rRNA), a copy of mitochondrial valine transfer RNA (mt-tRNA(Val)), which plays an integral structural role, and 52 different proteins. Interacts with Aurora-A. Ubiquitously expressed and especially highly expressed in heart, skeletal muscle and testis.

It localises to the mitochondrion matrix. The protein resides in the nucleus. Its function is as follows. May act as a negative regulator of Aurora-A kinase, by down-regulation through proteasome-dependent degradation. The chain is Small ribosomal subunit protein mS38 (AURKAIP1) from Homo sapiens (Human).